The primary structure comprises 1107 residues: Rho GTPase-activating protein 39 (1107 aa).

The segment at 1-21 is disordered; that stretch reads MSQAQDYECRSHHVDEQEPRI. The residue at position 2 (S2) is an N-acetylserine. Positions 7–19 are enriched in basic and acidic residues; sequence YECRSHHVDEQEP. WW domains follow at residues 25 to 58 and 63 to 97; these read STRL…PPAG and RTSE…RPQN. Residues 111–122 show a composition bias toward polar residues; that stretch reads QNTESPRASADN. 4 disordered regions span residues 111 to 173, 218 to 267, 282 to 311, and 326 to 370; these read QNTE…PPGV, PSFL…PERR, SPLL…LYEE, and MDVQ…LMRT. A compositionally biased stretch (low complexity) spans 123 to 136; the sequence is SPGRGSRDGSTGSS. A compositionally biased stretch (polar residues) spans 242–254; it reads SGSQHSPNLQTFV. Residue S282 is modified to Phosphoserine. Composition is skewed to polar residues over residues 331–343 and 353–369; these read EANS…SPQR and LQTT…QLMR. Phosphoserine occurs at positions 380, 384, 402, and 403. Disordered regions lie at residues 404–429, 441–529, and 563–585; these read PKLR…QPSP, SGDY…RASL, and MKQR…GAVP. The span at 470–484 shows a compositional bias: polar residues; that stretch reads SWSSQQDTMSSTGYS. 4 positions are modified to phosphoserine: S597, S683, S708, and S719. Positions 715–867 constitute a MyTH4 domain; it reads WSSESIKKPM…PYVEEPDGVA (153 aa). Positions 914–1102 constitute a Rho-GAP domain; it reads SALQEVMSMQ…VLIQHLDTSF (189 aa).

It is found in the nucleus. This chain is Rho GTPase-activating protein 39 (Arhgap39), found in Mus musculus (Mouse).